Consider the following 214-residue polypeptide: Ribonuclease HII (214 aa).

Positions 26–214 (EIVCGVDEAG…PVREAFDLIR (189 aa)) constitute an RNase H type-2 domain. The a divalent metal cation site is built by D32, E33, and D124.

This sequence belongs to the RNase HII family. Requires Mn(2+) as cofactor. Mg(2+) serves as cofactor.

The protein localises to the cytoplasm. The catalysed reaction is Endonucleolytic cleavage to 5'-phosphomonoester.. In terms of biological role, endonuclease that specifically degrades the RNA of RNA-DNA hybrids. In Burkholderia mallei (strain NCTC 10247), this protein is Ribonuclease HII.